A 281-amino-acid chain; its full sequence is DegV domain-containing protein DR_1986 (281 aa).

The DegV domain occupies 3–278 (IAIVTDSTSD…PGAVGVALEP (276 aa)). Residues Thr61 and Ser93 each contribute to the hexadecanoate site.

Its function is as follows. May bind long-chain fatty acids, such as palmitate, and may play a role in lipid transport or fatty acid metabolism. This is DegV domain-containing protein DR_1986 from Deinococcus radiodurans (strain ATCC 13939 / DSM 20539 / JCM 16871 / CCUG 27074 / LMG 4051 / NBRC 15346 / NCIMB 9279 / VKM B-1422 / R1).